A 69-amino-acid chain; its full sequence is MLCLPVFIILLLLASPAAPKSLETRIQNDLIRAGLTDADLKTEKGFLSGLLNVAGSVCCKVDTSCCSSQ.

The signal sequence occupies residues 1 to 19 (MLCLPVFIILLLLASPAAP). The propeptide occupies 20–54 (KSLETRIQNDLIRAGLTDADLKTEKGFLSGLLNVA).

Belongs to the conotoxin T superfamily. Post-translationally, contains 2 disulfide bonds that can be either 'C1-C3, C2-C4' or 'C1-C4, C2-C3', since these disulfide connectivities have been observed for conotoxins with cysteine framework V (for examples, see AC P0DQQ7 and AC P81755). In terms of tissue distribution, expressed by the venom duct.

The protein localises to the secreted. The chain is Conotoxin Lt5.10 from Conus litteratus (Lettered cone).